The chain runs to 141 residues: Large-conductance mechanosensitive channel (141 aa).

The next 2 helical transmembrane spans lie at 16–36 (VIDL…VDSL) and 83–103 (GAFI…FVAI).

Belongs to the MscL family. Homopentamer.

It is found in the cell inner membrane. In terms of biological role, channel that opens in response to stretch forces in the membrane lipid bilayer. May participate in the regulation of osmotic pressure changes within the cell. This is Large-conductance mechanosensitive channel from Azoarcus sp. (strain BH72).